A 321-amino-acid chain; its full sequence is tRNA U34 carboxymethyltransferase (321 aa).

Residues lysine 90, tryptophan 104, lysine 109, glycine 129, 151–153, 180–181, methionine 195, tyrosine 199, and arginine 314 contribute to the carboxy-S-adenosyl-L-methionine site; these read DPT and IE.

Belongs to the class I-like SAM-binding methyltransferase superfamily. CmoB family. In terms of assembly, homotetramer.

The enzyme catalyses carboxy-S-adenosyl-L-methionine + 5-hydroxyuridine(34) in tRNA = 5-carboxymethoxyuridine(34) in tRNA + S-adenosyl-L-homocysteine + H(+). Functionally, catalyzes carboxymethyl transfer from carboxy-S-adenosyl-L-methionine (Cx-SAM) to 5-hydroxyuridine (ho5U) to form 5-carboxymethoxyuridine (cmo5U) at position 34 in tRNAs. In Mannheimia succiniciproducens (strain KCTC 0769BP / MBEL55E), this protein is tRNA U34 carboxymethyltransferase.